A 20-amino-acid polypeptide reads, in one-letter code: Lysozyme (20 aa).

Monomer.

It localises to the secreted. The catalysed reaction is Hydrolysis of (1-&gt;4)-beta-linkages between N-acetylmuramic acid and N-acetyl-D-glucosamine residues in a peptidoglycan and between N-acetyl-D-glucosamine residues in chitodextrins.. In terms of biological role, has bacteriolytic activity. The polypeptide is Lysozyme (Lysobacter sp. (strain XL1)).